We begin with the raw amino-acid sequence, 37 residues long: Large ribosomal subunit protein bL36 (37 aa).

It belongs to the bacterial ribosomal protein bL36 family.

The chain is Large ribosomal subunit protein bL36 from Koribacter versatilis (strain Ellin345).